We begin with the raw amino-acid sequence, 48 residues long: Large ribosomal subunit protein eL40 (48 aa).

The protein belongs to the eukaryotic ribosomal protein eL40 family.

This Methanosphaera stadtmanae (strain ATCC 43021 / DSM 3091 / JCM 11832 / MCB-3) protein is Large ribosomal subunit protein eL40.